Reading from the N-terminus, the 342-residue chain is Trace amine-associated receptor 3 (342 aa).

At 1 to 35 (MDLIYIPEDLSSCPKFGNKSCPPTNRSFRVRLIMY) the chain is on the extracellular side. Asn-18 and Asn-25 each carry an N-linked (GlcNAc...) asparagine glycan. 2 disulfide bridges follow: Cys-21/Cys-185 and Cys-104/Cys-189. A helical transmembrane segment spans residues 36–56 (LLMTGAMVITIFGNLVIIISI). Residues 57–68 (SHFKQLHSPTNF) lie on the Cytoplasmic side of the membrane. The chain crosses the membrane as a helical span at residues 69 to 89 (LILSMATTDFLLGFVIMPYSM). The Extracellular portion of the chain corresponds to 90–150 (VRSVESCWYF…TTMTASMIKR (61 aa)). Residues 151–168 (LLFFCWAAPALFSFGLVL) form a helical membrane-spanning segment. The Cytoplasmic portion of the chain corresponds to 169–172 (SEAN). Residues 173-186 (VSGMQSYEILIACF) form an extracellular Loop 2 (ECL2) region. The helical transmembrane segment at 173-193 (VSGMQSYEILIACFNFCALTF) threads the bilayer. The Extracellular portion of the chain corresponds to 194-198 (NKFWG). The chain crosses the membrane as a helical span at residues 199–223 (TILFTTCFFTPGSIMVGIYGKIFIV). Topologically, residues 224–256 (SRRHARALGNMPENTKGAGRNLSKKKDRKAAKT) are cytoplasmic. A helical membrane pass occupies residues 257-277 (LGIVMGVFLACWLPCFLAVLI). The Extracellular portion of the chain corresponds to 278-286 (DPYLDYSTP). The helical transmembrane segment at 287 to 307 (IIVLDLLVWLGYFNSTCNPLI) threads the bilayer. Over 308-342 (HGFFYPWFRKALEHIVSGKIFRSNSDTANLFPEAH) the chain is Cytoplasmic.

It belongs to the G-protein coupled receptor 1 family.

Its subcellular location is the cell membrane. Functionally, olfactory receptor activated by several primary trace amines, including isoamylamine. Activated by isoamylamine and cyclohexylamine, but not to the corresponding alcohols, isoamylalcohol and cyclohexanol. This receptor is probably mediated by the G(s)-class of G-proteins which activate adenylate cyclase. The polypeptide is Trace amine-associated receptor 3 (Taar3) (Rattus norvegicus (Rat)).